The sequence spans 387 residues: Phosphoglycerate kinase (387 aa).

Residues 21-23 (DLN), arginine 36, and 59-62 (HLGR) each bind substrate. Lysine 84 bears the N6-acetyllysine mark. Substrate-binding residues include arginine 113 and arginine 146. ATP contacts are provided by residues lysine 197, glutamate 314, and 340–343 (GGDT).

Belongs to the phosphoglycerate kinase family. As to quaternary structure, monomer.

The protein localises to the cytoplasm. It catalyses the reaction (2R)-3-phosphoglycerate + ATP = (2R)-3-phospho-glyceroyl phosphate + ADP. Its pathway is carbohydrate degradation; glycolysis; pyruvate from D-glyceraldehyde 3-phosphate: step 2/5. The chain is Phosphoglycerate kinase from Escherichia coli O139:H28 (strain E24377A / ETEC).